A 428-amino-acid chain; its full sequence is Histidine--tRNA ligase (428 aa).

The protein belongs to the class-II aminoacyl-tRNA synthetase family. Homodimer.

Its subcellular location is the cytoplasm. The catalysed reaction is tRNA(His) + L-histidine + ATP = L-histidyl-tRNA(His) + AMP + diphosphate + H(+). The chain is Histidine--tRNA ligase from Mesomycoplasma hyopneumoniae (strain 232) (Mycoplasma hyopneumoniae).